The following is a 529-amino-acid chain: Peptide chain release factor 3 (529 aa).

Positions 11–280 constitute a tr-type G domain; the sequence is AKRRTFAIIS…GLVEWAPAPM (270 aa). Residues 20-27, 88-92, and 142-145 contribute to the GTP site; these read SHPDAGKT, DTPGH, and NKLD.

The protein belongs to the TRAFAC class translation factor GTPase superfamily. Classic translation factor GTPase family. PrfC subfamily.

It localises to the cytoplasm. Functionally, increases the formation of ribosomal termination complexes and stimulates activities of RF-1 and RF-2. It binds guanine nucleotides and has strong preference for UGA stop codons. It may interact directly with the ribosome. The stimulation of RF-1 and RF-2 is significantly reduced by GTP and GDP, but not by GMP. This chain is Peptide chain release factor 3, found in Shigella boydii serotype 18 (strain CDC 3083-94 / BS512).